A 101-amino-acid chain; its full sequence is Small ribosomal subunit protein uS14 (101 aa).

This sequence belongs to the universal ribosomal protein uS14 family. As to quaternary structure, part of the 30S ribosomal subunit. Contacts proteins S3 and S10.

In terms of biological role, binds 16S rRNA, required for the assembly of 30S particles and may also be responsible for determining the conformation of the 16S rRNA at the A site. This chain is Small ribosomal subunit protein uS14, found in Aliivibrio fischeri (strain MJ11) (Vibrio fischeri).